The chain runs to 208 residues: LexA repressor (208 aa).

The H-T-H motif DNA-binding region spans 30 to 50 (VREICAAVKLSSTSTVHGHLA). Residues Ser-129 and Lys-167 each act as for autocatalytic cleavage activity in the active site.

It belongs to the peptidase S24 family. In terms of assembly, homodimer.

It catalyses the reaction Hydrolysis of Ala-|-Gly bond in repressor LexA.. Its function is as follows. Represses a number of genes involved in the response to DNA damage (SOS response), including recA and lexA. In the presence of single-stranded DNA, RecA interacts with LexA causing an autocatalytic cleavage which disrupts the DNA-binding part of LexA, leading to derepression of the SOS regulon and eventually DNA repair. This chain is LexA repressor, found in Lactobacillus helveticus (strain DPC 4571).